Consider the following 550-residue polypeptide: MVVIANKGALWAYYCKRLLNSVTYMMYPLIRKRTMKKLLLIVGLLLACSTVMRRIPLFHESFHLPSLDPRASTTTSQKFQEYRSDFLEKLETAEPPEDVIMFTAYGLGVHTHNLFMLACDMAKTSDSQIRFLLLTDGTILPEALYDYNRETVSTCPLSFLSYSTGVERLSKELILKDLLSLQFQQALLAISPSVIVTSEHSPLVMFQAINPYLNNNYYTHDTVDTNALEENSWITKLDMQSLQHFRTPRINVVLIVEDGTYKYLLNLMRDLGRDFKNSEEYPHLFIHLFMSENIPNLSSIRANWPQHRLFINLHFNQKDLNLIEVWTPPNDYTYALVVDLQPDSPPQLSSNLITWLKYKILLIYYHKSSSTYKNNIAAIVPSFDFSNEEAVILSQTINSNIVLFAPVVFQKFQEYMAVRLLNPNFELPESNGIEFAHEDSVLGHSKPSLTEFHAILGLYSLVISYNHFEGSLSNELRLDNLIAYFLKNPSVINFEEISEKNLYFTYDSKRLSFQGAKNESKKLYNSVTSCPYYGSLSSFPIRSIFCEPLM.

Residues 1-53 form the signal peptide; it reads MVVIANKGALWAYYCKRLLNSVTYMMYPLIRKRTMKKLLLIVGLLLACSTVMR. N-linked (GlcNAc...) asparagine glycosylation is found at asparagine 296 and asparagine 518.

The protein resides in the endoplasmic reticulum. This is an uncharacterized protein from Schizosaccharomyces pombe (strain 972 / ATCC 24843) (Fission yeast).